The primary structure comprises 624 residues: Chaperone protein HtpG (624 aa).

An a; substrate-binding region spans residues 1-336; the sequence is MKGQETRGFQ…SSDLSLNVSR (336 aa). Positions 337–552 are b; that stretch reads EILQDSTVTR…ADEMSTQMAK (216 aa). Residues 553-624 are c; the sequence is LFAAAGQKVP…IRRMNQLLVS (72 aa).

Belongs to the heat shock protein 90 family. As to quaternary structure, homodimer.

It localises to the cytoplasm. Functionally, molecular chaperone. Has ATPase activity. This Shigella dysenteriae serotype 1 (strain Sd197) protein is Chaperone protein HtpG.